The primary structure comprises 1893 residues: Endoribonuclease Dicer (1893 aa).

A Helicase ATP-binding domain is found at 41–217 (LLEAALDHNT…DLEEKIQKLE (177 aa)). An ATP-binding site is contributed by 54-61 (LNSGSGKT). The DECH box signature appears at 165-168 (DECH). Residues 400 to 424 (VSWSDSEDDDDEDEEIEEKEKTETS) form a disordered region. Acidic residues predominate over residues 404 to 416 (DSEDDDDEDEEIE). Positions 424 to 593 (SFPSPFTNIL…SIDCGNTESE (170 aa)) constitute a Helicase C-terminal domain. Residues 621–713 (AIGHINRYCA…MPVGKETVKY (93 aa)) enclose the Dicer dsRNA-binding fold domain. A disordered region spans residues 718–737 (DLHDEEETSVPGRPGSTKRR). Positions 886–1036 (KFVEDIEKSE…LVPELCAIHP (151 aa)) constitute a PAZ domain. RNase III domains are found at residues 1249 to 1380 (TSDM…ETSG) and 1637 to 1795 (FENF…MDSG). Residues E1293, D1371, E1374, E1676, D1781, and E1784 each coordinate Mg(2+). The 66-residue stretch at 1820–1885 (VPRSPVRELL…ARRALRSLKA (66 aa)) folds into the DRBM domain.

The protein belongs to the helicase family. Dicer subfamily. As to quaternary structure, component of the RISC loading complex (RLC), or micro-RNA (miRNA) loading complex (miRLC), which is composed of dicer1, ago2 and tarbp2; dicer1 and tarbp2 are required to process precursor miRNAs (pre-miRNAs) to mature miRNAs and then load them onto ago2. Note that the trimeric RLC/miRLC is also referred to as RISC. The cofactor is Mg(2+). Requires Mn(2+) as cofactor.

It localises to the cytoplasm. The enzyme catalyses Endonucleolytic cleavage to 5'-phosphomonoester.. Its function is as follows. Double-stranded RNA (dsRNA) endoribonuclease playing a central role in short dsRNA-mediated post-transcriptional gene silencing. Cleaves naturally occurring long dsRNAs and short hairpin pre-microRNAs (miRNA) into fragments of twenty-one to twenty-three nucleotides with 3' overhang of two nucleotides, producing respectively short interfering RNAs (siRNA) and mature microRNAs. SiRNAs and miRNAs serve as guide to direct the RNA-induced silencing complex (RISC) to complementary RNAs to degrade them or prevent their translation. Gene silencing mediated by siRNAs, also called RNA interference, controls the elimination of transcripts from mobile and repetitive DNA elements of the genome but also the degradation of exogenous RNA of viral origin for instance. The miRNA pathway on the other side is a mean to specifically regulate the expression of target genes. The sequence is that of Endoribonuclease Dicer (dicer1) from Xenopus tropicalis (Western clawed frog).